The primary structure comprises 331 residues: UDP-GalNAc:beta-1,3-N-acetylgalactosaminyltransferase 1 (331 aa).

Residues 1 to 20 (MASALWTVLPSRMSLRSLQW) are Cytoplasmic-facing. The chain crosses the membrane as a helical; Signal-anchor for type II membrane protein span at residues 21–43 (SLLLLSLLSFLVMWYLSLPHYNV). Residues 44-331 (IERVNWMYFY…VMLRNTTCHY (288 aa)) lie on the Lumenal side of the membrane. N-linked (GlcNAc...) asparagine glycosylation is found at asparagine 72, asparagine 154, asparagine 198, asparagine 212, and asparagine 326.

Belongs to the glycosyltransferase 31 family. It depends on Mg(2+) as a cofactor.

It localises to the golgi apparatus membrane. It catalyses the reaction a globoside Gb3Cer (d18:1(4E)) + UDP-N-acetyl-alpha-D-galactosamine = a globoside Gb4Cer (d18:1(4E)) + UDP + H(+). The protein operates within protein modification; protein glycosylation. Its function is as follows. Transfers N-acetylgalactosamine onto globotriaosylceramide. Plays a critical role in preimplantation stage embryonic development. The sequence is that of UDP-GalNAc:beta-1,3-N-acetylgalactosaminyltransferase 1 (B3GALNT1) from Pongo abelii (Sumatran orangutan).